Reading from the N-terminus, the 1239-residue chain is MASTMIPYTVNIKLAARTLTGTLNLQNKTAVDWGWQGLIAQGCHSSILIIDPNTAQTIQVLERHKANVVKVKWSRENYHHSLSSPYSLRLASADAAGKIIVWDVVSGMAHCEIQEHSKPIQDMDWLWAQDASRDLLLAVHPPNYIVLWNGDTGTKLWKKSYAENILSFSFDPFEPSNLALLTSEGIVFITDFSHSKPPGSGGKKVYIASPHSSPAHSKPAAAQPTGAKKALNKVKVLITNEKPTAEAVTLNDCLQLSYLPSKRNHMLLLYPREILILDLELSQTVGVVAIERSGVPFIQVIPCAQRDALYCLHENGCITLRVCRSTTPSPNETVTDPEQNSQELVYDLRSQCDAIRVTKTVRPYRVVICPVNENKAVLVVSDGRVMLWELKAHASKSSSNLSSGLPPLYSAVNFCGTPLRQNQKCIPDLSLNSMIGHSLIPGVDSPRPLADQKEVHLKFLLTGLLSGLPLPPFSLRMCPPLTTKNINHYQPLLAVGTSNGSVLVYNLTSGLLHKELSVHSCEVRGIEWISLTSFLSFATSVPNNLGLVRNELQHVDLRTGRCFAFRGERGNDEPAIEMIKVSHLKQYLVVVFRDKPLELWDVRTGTLLREMAKNFPTVTALEWSPSHNLKSLKKKQLAAREAMARQTTLADAEQSSVESSVISLLQDAESKSESSQGISAREHFVFTDTDGQVYHITVEGNTVKDGARIPPDGSMGSIACIAWKGDTLVLGDVDGNLNFWDLKARLSRGVPTHRGWVKKIRFAPGKGNQKLLVMYTDGAEVWDTKEVQMVSSIRVGRNVNYRILDIDWCTSDKVVLASDDGCVRVLEMAMKSASYRMDEQDLTDPVWCPYLLLPRAALTLKAFLLLQPWMDTFTMDITQVDYKEKDEIKGLIQEQLNSLSNDIKSVLQDPNLSLLQRCLLVSRLFGDESDLQFWTVASHYIQAFAQSAQSNESVPEGQAAASHLDICHDILCESSFFQGFQLERVRLQEVKRSSYEHTKKCADQLLLLGQTDRAVQLLLETSADNSSYYCDSLKACLVTTITSSGPSQSTIKLVATNMIANGKLAEGVQLLCLIDKAADACRYLQTYGEWTRAAWLAKVRLNAAEGSDVLKRWAEHLCSPQVNQKSKAMLVLLSLGCFQKVGEMLHSMRYFDRAALFIEACLKYGVMETNDDINKLVGAAFVDYAKLLRSIGLKQGAVHWASRAGEAGKQLLEDLSQTEGTGTESSPADDTDNSLVNIE.

9 WD repeats span residues 63-112 (RHKA…AHCE), 115-158 (EHSK…KLWK), 358-398 (TKTV…SKSS), 476-515 (RMCP…LHKE), 571-610 (NDEP…LLRE), 713-750 (GSMG…SRGV), 752-792 (THRG…MVSS), 798-836 (NVNY…ASYR), and 898-944 (SLSN…IQAF). Residues 1213–1239 (EDLSQTEGTGTESSPADDTDNSLVNIE) are disordered. A compositionally biased stretch (polar residues) spans 1215–1226 (LSQTEGTGTESS).

As to quaternary structure, component of the complex WDR11.

It localises to the cytoplasm. The protein resides in the cytoskeleton. It is found in the cilium basal body. Its subcellular location is the nucleus. The protein localises to the cilium axoneme. It localises to the cytoplasmic vesicle. The protein resides in the golgi apparatus. It is found in the trans-Golgi network. Involved in the Hedgehog (Hh) signaling pathway, is essential for normal ciliogenesis. Regulates the proteolytic processing of gli3 and cooperates with the transcription factor emx1 in the induction of downstream Hh pathway gene expression and gonadotropin-releasing hormone production. WDR11 complex facilitates the tethering of Adaptor protein-1 complex (AP-1)-derived vesicles. The sequence is that of WD repeat-containing protein 11 (wdr11) from Danio rerio (Zebrafish).